The chain runs to 375 residues: Phytanoyl-CoA hydroxylase-interacting protein-like (375 aa).

A phosphoserine mark is found at Ser11, Ser12, and Ser15. The N-linked (GlcNAc...) asparagine glycan is linked to Asn22. Ser24 bears the Phosphoserine mark. Residue Asn36 is glycosylated (N-linked (GlcNAc...) asparagine). The region spanning 51 to 160 is the Fibronectin type-III domain; it reads VPHNIKINNI…EIIEFCTADY (110 aa).

It belongs to the PHYHIP family.

May play a role in the development of the central system. This is Phytanoyl-CoA hydroxylase-interacting protein-like (Phyhipl) from Mus musculus (Mouse).